We begin with the raw amino-acid sequence, 262 residues long: Acyl-[acyl-carrier-protein]--UDP-N-acetylglucosamine O-acyltransferase (262 aa).

Belongs to the transferase hexapeptide repeat family. LpxA subfamily. As to quaternary structure, homotrimer.

The protein localises to the cytoplasm. It catalyses the reaction a (3R)-hydroxyacyl-[ACP] + UDP-N-acetyl-alpha-D-glucosamine = a UDP-3-O-[(3R)-3-hydroxyacyl]-N-acetyl-alpha-D-glucosamine + holo-[ACP]. The protein operates within glycolipid biosynthesis; lipid IV(A) biosynthesis; lipid IV(A) from (3R)-3-hydroxytetradecanoyl-[acyl-carrier-protein] and UDP-N-acetyl-alpha-D-glucosamine: step 1/6. Its function is as follows. Involved in the biosynthesis of lipid A, a phosphorylated glycolipid that anchors the lipopolysaccharide to the outer membrane of the cell. The chain is Acyl-[acyl-carrier-protein]--UDP-N-acetylglucosamine O-acyltransferase from Mannheimia succiniciproducens (strain KCTC 0769BP / MBEL55E).